A 747-amino-acid chain; its full sequence is Myotubularin-related protein 12 (747 aa).

Residues 205 to 643 (FDTLKDWCWE…PEIKVWAQRY (439 aa)) form the Myotubularin phosphatase domain. The interaction with MTM1 stretch occupies residues 449 to 558 (VPVFLLFLDC…KGQRKGMRFK (110 aa)). A phosphoserine mark is found at serine 564, serine 601, and serine 716.

This sequence belongs to the protein-tyrosine phosphatase family. Non-receptor class myotubularin subfamily. Heterodimer with lipid phosphatase MTM1. Heterodimer with lipid phosphatase MTMR2. In terms of tissue distribution, expressed in skeletal muscles (at protein level). Ubiquitous with prominent expression in brain, heart, kidney, placenta, and lung.

It is found in the cytoplasm. The protein resides in the sarcoplasmic reticulum. The protein localises to the myofibril. Its subcellular location is the sarcomere. Acts as an adapter for the myotubularin-related phosphatases. Regulates phosphatase MTM1 protein stability and possibly its intracellular location. By stabilizing MTM1 protein levels, required for skeletal muscle maintenance but not for myogenesis. This chain is Myotubularin-related protein 12 (MTMR12), found in Homo sapiens (Human).